Consider the following 332-residue polypeptide: Ribosomal RNA small subunit methyltransferase H (332 aa).

S-adenosyl-L-methionine contacts are provided by residues 38-40 (GGY), Asp56, Phe83, Asp104, and Gln111. A disordered region spans residues 309–332 (TETPFSEDISRPDTHIPRSRRQSA).

The protein belongs to the methyltransferase superfamily. RsmH family.

The protein resides in the cytoplasm. The catalysed reaction is cytidine(1402) in 16S rRNA + S-adenosyl-L-methionine = N(4)-methylcytidine(1402) in 16S rRNA + S-adenosyl-L-homocysteine + H(+). In terms of biological role, specifically methylates the N4 position of cytidine in position 1402 (C1402) of 16S rRNA. This chain is Ribosomal RNA small subunit methyltransferase H, found in Zymomonas mobilis subsp. mobilis (strain ATCC 31821 / ZM4 / CP4).